The primary structure comprises 132 residues: Guanyl-specific ribonuclease C2 (132 aa).

The first 26 residues, M1 to R26, serve as a signal peptide directing secretion. Disulfide bonds link C28–C36 and C32–C129. H66 is a catalytic residue. E84 functions as the Proton acceptor in the catalytic mechanism. H118 acts as the Proton donor in catalysis.

Belongs to the ribonuclease N1/T1 family.

The protein resides in the secreted. The enzyme catalyses [RNA] containing guanosine + H2O = an [RNA fragment]-3'-guanosine-3'-phosphate + a 5'-hydroxy-ribonucleotide-3'-[RNA fragment].. The protein is Guanyl-specific ribonuclease C2 of Aspergillus clavatus (strain ATCC 1007 / CBS 513.65 / DSM 816 / NCTC 3887 / NRRL 1 / QM 1276 / 107).